The primary structure comprises 72 residues: UPF0270 protein ESA_04379 (72 aa).

Belongs to the UPF0270 family.

This is UPF0270 protein ESA_04379 from Cronobacter sakazakii (strain ATCC BAA-894) (Enterobacter sakazakii).